The following is a 370-amino-acid chain: Peptide chain release factor 1 (370 aa).

At Q237 the chain carries N5-methylglutamine. Residues 286–296 (ERQRSARDATR) show a composition bias toward basic and acidic residues. Residues 286-310 (ERQRSARDATRKSQVGTGDRSEKIR) are disordered.

It belongs to the prokaryotic/mitochondrial release factor family. In terms of processing, methylated by PrmC. Methylation increases the termination efficiency of RF1.

The protein localises to the cytoplasm. Its function is as follows. Peptide chain release factor 1 directs the termination of translation in response to the peptide chain termination codons UAG and UAA. This chain is Peptide chain release factor 1, found in Anaeromyxobacter dehalogenans (strain 2CP-C).